A 279-amino-acid polypeptide reads, in one-letter code: Biotin synthase (279 aa).

One can recognise a Radical SAM core domain in the interval 1–228 (MKDIFLCSIC…SARLMIAGGR (228 aa)). Cys17, Cys21, and Cys24 together coordinate [4Fe-4S] cluster. The [2Fe-2S] cluster site is built by Cys61, Cys96, Cys154, and Arg221.

Belongs to the radical SAM superfamily. Biotin synthase family. Homodimer. Requires [4Fe-4S] cluster as cofactor. It depends on [2Fe-2S] cluster as a cofactor.

The enzyme catalyses (4R,5S)-dethiobiotin + (sulfur carrier)-SH + 2 reduced [2Fe-2S]-[ferredoxin] + 2 S-adenosyl-L-methionine = (sulfur carrier)-H + biotin + 2 5'-deoxyadenosine + 2 L-methionine + 2 oxidized [2Fe-2S]-[ferredoxin]. Its pathway is cofactor biosynthesis; biotin biosynthesis; biotin from 7,8-diaminononanoate: step 2/2. Its function is as follows. Catalyzes the conversion of dethiobiotin (DTB) to biotin by the insertion of a sulfur atom into dethiobiotin via a radical-based mechanism. This is Biotin synthase from Wolinella succinogenes (strain ATCC 29543 / DSM 1740 / CCUG 13145 / JCM 31913 / LMG 7466 / NCTC 11488 / FDC 602W) (Vibrio succinogenes).